The following is a 1133-amino-acid chain: Exportin-4 (1133 aa).

This sequence belongs to the exportin family. Interacts with Ran and cargo proteins in a GTP-dependent manner.

Its subcellular location is the cytoplasm. It is found in the nucleus. Mediates the nuclear export of proteins (cargos). In the nucleus binds cooperatively to its cargo and to the GTPase Ran in its active GTP-bound form. Docking of this trimeric complex to the nuclear pore complex (NPC) is mediated through binding to nucleoporins. Upon transit of a nuclear export complex into the cytoplasm, disassembling of the complex and hydrolysis of Ran-GTP to Ran-GDP cause release of the cargo from the export receptor. Xpo4 then return to the nuclear compartment and mediate another round of transport. The directionality of nuclear export is thought to be conferred by an asymmetric distribution of the GTP- and GDP-bound forms of Ran between the cytoplasm and nucleus. This chain is Exportin-4 (xpo4), found in Dictyostelium discoideum (Social amoeba).